Here is a 138-residue protein sequence, read N- to C-terminus: Putative pre-16S rRNA nuclease (138 aa).

The protein belongs to the YqgF nuclease family.

The protein resides in the cytoplasm. In terms of biological role, could be a nuclease involved in processing of the 5'-end of pre-16S rRNA. This chain is Putative pre-16S rRNA nuclease, found in Listeria innocua serovar 6a (strain ATCC BAA-680 / CLIP 11262).